We begin with the raw amino-acid sequence, 907 residues long: Alanine--tRNA ligase (907 aa).

Residues His-602, His-606, Cys-706, and His-710 each contribute to the Zn(2+) site.

Belongs to the class-II aminoacyl-tRNA synthetase family. Requires Zn(2+) as cofactor.

It is found in the cytoplasm. It carries out the reaction tRNA(Ala) + L-alanine + ATP = L-alanyl-tRNA(Ala) + AMP + diphosphate. Its function is as follows. Catalyzes the attachment of alanine to tRNA(Ala) in a two-step reaction: alanine is first activated by ATP to form Ala-AMP and then transferred to the acceptor end of tRNA(Ala). Also edits incorrectly charged Ser-tRNA(Ala) and Gly-tRNA(Ala) via its editing domain. This chain is Alanine--tRNA ligase, found in Thermofilum pendens (strain DSM 2475 / Hrk 5).